Here is a 603-residue protein sequence, read N- to C-terminus: Serine/threonine-protein kinase HAL4/SAT4 (603 aa).

3 stretches are compositionally biased toward polar residues: residues 1 to 15 (MTGM…PQQT), 30 to 60 (RSGS…SASK), and 68 to 85 (TPTT…NTAG). 3 disordered regions span residues 1 to 86 (MTGM…TAGV), 150 to 171 (LSPK…PTPT), and 267 to 301 (DKYP…THNI). The segment covering 159-171 (NSNTAITPAPTPT) has biased composition (low complexity). Positions 282-296 (PERDIYRSDQKDSKN) are enriched in basic and acidic residues. A Protein kinase domain is found at 316–590 (GRCQEVLGKG…GKQILNSEWG (275 aa)). Residues 322–330 (LGKGAFGVV) and Lys-353 contribute to the ATP site. Asp-449 serves as the catalytic Proton acceptor.

The protein belongs to the protein kinase superfamily. Ser/Thr protein kinase family.

The enzyme catalyses L-seryl-[protein] + ATP = O-phospho-L-seryl-[protein] + ADP + H(+). It catalyses the reaction L-threonyl-[protein] + ATP = O-phospho-L-threonyl-[protein] + ADP + H(+). Promotes K(+) uptake, by the potassium transporter TRK1-TRK2, which leads to the subsequent cellular resistance to toxic cations such as Na(+), Li(+) and Ca(2+). The polypeptide is Serine/threonine-protein kinase HAL4/SAT4 (SAT4) (Saccharomyces cerevisiae (strain ATCC 204508 / S288c) (Baker's yeast)).